A 151-amino-acid chain; its full sequence is Putative pre-16S rRNA nuclease (151 aa).

Belongs to the YqgF nuclease family.

It localises to the cytoplasm. Functionally, could be a nuclease involved in processing of the 5'-end of pre-16S rRNA. The protein is Putative pre-16S rRNA nuclease of Gloeothece citriformis (strain PCC 7424) (Cyanothece sp. (strain PCC 7424)).